Here is an 875-residue protein sequence, read N- to C-terminus: Probable ubiquitin carboxyl-terminal hydrolase 7 (875 aa).

The segment at 54-167 adopts a UBP-type zinc-finger fold; sequence KECSHLKKGV…RDVQQFICSN (114 aa). Residues cysteine 56, histidine 58, cysteine 83, cysteine 86, cysteine 101, cysteine 104, cysteine 109, histidine 116, histidine 120, histidine 127, cysteine 140, and cysteine 143 each coordinate Zn(2+). The 668-residue stretch at 208–875 folds into the USP domain; the sequence is PGLKNLGATC…EAYMLFYERV (668 aa). Cysteine 217 functions as the Nucleophile in the catalytic mechanism. 2 positions are modified to phosphoserine: serine 333 and serine 337. The disordered stretch occupies residues 396–486; that stretch reads YSKELSQSSD…ASPKKEVLKS (91 aa). A compositionally biased stretch (low complexity) spans 401–438; it reads SQSSDSSQHQHDSFLPANSSPLAASSTKSLPSSELLDS. Over residues 473 to 484 the composition is skewed to basic and acidic residues; that stretch reads NHEEASPKKEVL. 2 positions are modified to phosphoserine: serine 486 and serine 493. Over residues 575 to 586 the composition is skewed to basic residues; that stretch reads RSRFSRSPKKSS. A disordered region spans residues 575–628; that stretch reads RSRFSRSPKKSSVKIVVDNANDDTDQAPTTNSSSLNENLLGGHASENDKSLKQS. Residues 600 to 611 show a composition bias toward polar residues; sequence QAPTTNSSSLNE. Serine 645 carries the phosphoserine modification. Histidine 812 serves as the catalytic Proton acceptor.

Belongs to the peptidase C19 family.

It carries out the reaction Thiol-dependent hydrolysis of ester, thioester, amide, peptide and isopeptide bonds formed by the C-terminal Gly of ubiquitin (a 76-residue protein attached to proteins as an intracellular targeting signal).. The chain is Probable ubiquitin carboxyl-terminal hydrolase 7 (ubp7) from Schizosaccharomyces pombe (strain 972 / ATCC 24843) (Fission yeast).